We begin with the raw amino-acid sequence, 377 residues long: Early estrogen-induced gene 1 protein (377 aa).

Residues 2-145 enclose the C2 NT-type domain; the sequence is AFLTKKKKFK…ILKVNIGMSL (144 aa). 3 stretches are compositionally biased toward polar residues: residues 160–173, 188–198, and 222–234; these read KTVS…SLQM, VRQNRSRQAML, and SRNS…QSKI. Residues 160–313 form a disordered region; that stretch reads KTVSPPGQDS…SVESQPTWVD (154 aa). Low complexity predominate over residues 256–269; sequence TSTSSSVSGGLSLT. Over residues 274-285 the composition is skewed to basic and acidic residues; the sequence is EPERDVKPEKPP.

The protein belongs to the EEIG family.

It is found in the nucleus. The protein localises to the cytoplasm. Functionally, may be involved in osteoclast differentiation. In Xenopus laevis (African clawed frog), this protein is Early estrogen-induced gene 1 protein (eeig1).